The following is a 102-amino-acid chain: NADH-quinone oxidoreductase subunit K (102 aa).

3 helical membrane-spanning segments follow: residues 6–26 (MEHG…GLMV), 30–50 (ILFV…AFVV), and 62–82 (IMFI…LAIL).

The protein belongs to the complex I subunit 4L family. In terms of assembly, NDH-1 is composed of 13 different subunits. Subunits NuoA, H, J, K, L, M, N constitute the membrane sector of the complex.

The protein localises to the cell inner membrane. The enzyme catalyses a quinone + NADH + 5 H(+)(in) = a quinol + NAD(+) + 4 H(+)(out). In terms of biological role, NDH-1 shuttles electrons from NADH, via FMN and iron-sulfur (Fe-S) centers, to quinones in the respiratory chain. The immediate electron acceptor for the enzyme in this species is believed to be ubiquinone. Couples the redox reaction to proton translocation (for every two electrons transferred, four hydrogen ions are translocated across the cytoplasmic membrane), and thus conserves the redox energy in a proton gradient. This Azotobacter vinelandii (strain DJ / ATCC BAA-1303) protein is NADH-quinone oxidoreductase subunit K.